Reading from the N-terminus, the 164-residue chain is MYRIRVFGDPVLRKRAKPVTKFDENLKKTIERMIETMYHYDGVGLAAPQVGISQRFFVMDVGNGPVAVINPEILEIDPETEVAEEGCLSFPEIFVEIERSKRIKVKYQNTRGEYVEEELEGYAARVFQHEFDHLNGVLIIDRISPAKRLLLRKKLMDIARTVKR.

Residues C87 and H129 each contribute to the Fe cation site. Residue E130 is part of the active site. H133 contributes to the Fe cation binding site.

The protein belongs to the polypeptide deformylase family. Fe(2+) is required as a cofactor.

It carries out the reaction N-terminal N-formyl-L-methionyl-[peptide] + H2O = N-terminal L-methionyl-[peptide] + formate. Removes the formyl group from the N-terminal Met of newly synthesized proteins. Requires at least a dipeptide for an efficient rate of reaction. N-terminal L-methionine is a prerequisite for activity but the enzyme has broad specificity at other positions. The chain is Peptide deformylase from Thermotoga maritima (strain ATCC 43589 / DSM 3109 / JCM 10099 / NBRC 100826 / MSB8).